The chain runs to 154 residues: Lipoprotein signal peptidase (154 aa).

The next 2 helical transmembrane spans lie at 57-77 (LVLS…MIKY) and 86-103 (ISLS…YDRV). Active-site residues include D110 and D129. Residues 124–144 (VFNVADICVVVGTIMIAIFIV) traverse the membrane as a helical segment.

Belongs to the peptidase A8 family.

The protein resides in the cell membrane. It carries out the reaction Release of signal peptides from bacterial membrane prolipoproteins. Hydrolyzes -Xaa-Yaa-Zaa-|-(S,diacylglyceryl)Cys-, in which Xaa is hydrophobic (preferably Leu), and Yaa (Ala or Ser) and Zaa (Gly or Ala) have small, neutral side chains.. Its pathway is protein modification; lipoprotein biosynthesis (signal peptide cleavage). This protein specifically catalyzes the removal of signal peptides from prolipoproteins. This chain is Lipoprotein signal peptidase, found in Clostridium acetobutylicum (strain ATCC 824 / DSM 792 / JCM 1419 / IAM 19013 / LMG 5710 / NBRC 13948 / NRRL B-527 / VKM B-1787 / 2291 / W).